A 213-amino-acid polypeptide reads, in one-letter code: Ras-related protein Rab-25 (213 aa).

Residues Ser-21, Gly-24, Lys-25, Thr-26, Asn-27, Ser-38, His-39, Thr-43, and Thr-44 each contribute to the GTP site. Residue Thr-26 participates in Mg(2+) binding. 2 short sequence motifs (switch) span residues 35-49 and 67-84; these read NEFS…GVEF and DTAG…YYRG. Mg(2+) contacts are provided by Thr-44 and Asp-67. Residues Gly-70, Asn-125, Lys-126, Asp-128, Ala-156, and Leu-157 each coordinate GTP. S-geranylgeranyl cysteine attachment occurs at residues Cys-209 and Cys-210. Cys-210 is modified (cysteine methyl ester). The propeptide at 211–213 is removed in mature form; sequence ISL.

It belongs to the small GTPase superfamily. Rab family. In terms of assembly, interacts (GTP-bound form) with RAB11FIP1, RAB11FIP2, RAB11FIP3 and RAB11FIP4. Interacts (via the hypervariable C-terminal region) with ITGB1 (via the cytoplasmic region); the interaction is GTP-dependent. Interacts with ITGAV. Associates with the integrin alpha-V/beta-1 heterodimer. Interacts with VPS33B. Mg(2+) is required as a cofactor.

The protein localises to the cell membrane. It is found in the cell projection. Its subcellular location is the pseudopodium membrane. It localises to the cytoplasmic vesicle. The enzyme catalyses GTP + H2O = GDP + phosphate + H(+). Its activity is regulated as follows. Regulated by guanine nucleotide exchange factors (GEFs) which promote the exchange of bound GDP for free GTP. Regulated by GTPase activating proteins (GAPs) which increase the GTP hydrolysis activity. Inhibited by GDP dissociation inhibitors (GDIs) which prevent Rab-GDP dissociation. Functionally, the small GTPases Rab are key regulators of intracellular membrane trafficking, from the formation of transport vesicles to their fusion with membranes. Rabs cycle between an inactive GDP-bound form and an active GTP-bound form that is able to recruit to membranes different set of downstream effectors directly responsible for vesicle formation, movement, tethering and fusion. RAB25 regulates epithelial cell differentiation, proliferation and survival, thereby playing key roles in tumorigenesis. Promotes invasive migration of cells in which it functions to localize and maintain integrin alpha-V/beta-1 at the tips of extending pseudopodia. Involved in the regulation of epithelial morphogenesis through the control of CLDN4 expression and localization at tight junctions. May selectively regulate the apical recycling pathway. Together with MYO5B regulates transcytosis. The polypeptide is Ras-related protein Rab-25 (RAB25) (Canis lupus familiaris (Dog)).